The sequence spans 429 residues: Ribosomal RNA small subunit methyltransferase B (429 aa).

S-adenosyl-L-methionine is bound by residues 254–260 (CAAPGGK), Asp-277, Asp-303, and Asp-322. Cys-375 serves as the catalytic Nucleophile.

Belongs to the class I-like SAM-binding methyltransferase superfamily. RsmB/NOP family.

The protein localises to the cytoplasm. It carries out the reaction cytidine(967) in 16S rRNA + S-adenosyl-L-methionine = 5-methylcytidine(967) in 16S rRNA + S-adenosyl-L-homocysteine + H(+). In terms of biological role, specifically methylates the cytosine at position 967 (m5C967) of 16S rRNA. The sequence is that of Ribosomal RNA small subunit methyltransferase B from Escherichia fergusonii (strain ATCC 35469 / DSM 13698 / CCUG 18766 / IAM 14443 / JCM 21226 / LMG 7866 / NBRC 102419 / NCTC 12128 / CDC 0568-73).